The sequence spans 398 residues: Bombesin receptor subtype-3 (398 aa).

The Extracellular portion of the chain corresponds to 1-40; sequence MAQRQPHSPNQTLISITNDTESSSVVSNDNTNKGRSGDNS. N-linked (GlcNAc...) asparagine glycosylation is found at Asn10 and Asn18. A helical membrane pass occupies residues 41–62; the sequence is PGIEALCAIYITYAVIISVGIL. Topologically, residues 63–81 are cytoplasmic; sequence GNAILIKVFFKTKSMQTVP. A helical membrane pass occupies residues 82–102; sequence NIFITSLAFGDLLLLLTCVPV. Over 103–120 the chain is Extracellular; that stretch reads DATHYLAEGWLFGRIGCK. Cysteines 119 and 202 form a disulfide. The helical transmembrane segment at 121-142 threads the bilayer; it reads VLSFIRLTSVGVSVFTLTILSA. Topologically, residues 143-162 are cytoplasmic; it reads DRYKAVVKPLERQPSNAILK. The helical transmembrane segment at 163–183 threads the bilayer; that stretch reads TCIKAGCVWIVSMIFALPEAI. The Extracellular segment spans residues 184 to 219; sequence FSNVYSFRDPNKNVTFESCTSYPVSKKLLQEIHSLL. A helical transmembrane segment spans residues 220–240; the sequence is CFLVFYIIPLSIISVYYSLIA. Over 241 to 271 the chain is Cytoplasmic; it reads RTLYKSTLNIPTEEQGHARKQIESRKRIART. The helical transmembrane segment at 272–292 threads the bilayer; that stretch reads VLVLVALFALCWLPNHLLYLY. Residues 293–312 lie on the Extracellular side of the membrane; it reads HSFTSQTYVDPSAMHFIFTI. The helical transmembrane segment at 313 to 332 threads the bilayer; sequence FSRVLAFSNSCVNPFALYWL. The Cytoplasmic segment spans residues 333-398; it reads SKTFQKHFKA…CSVKQAEDRV (66 aa). The S-palmitoyl cysteine moiety is linked to residue Cys346.

The protein belongs to the G-protein coupled receptor 1 family. Interacts with C6orf89.

It is found in the cell membrane. Role in sperm cell division, maturation, or function. This receptor mediates its action by association with G proteins that activate a phosphatidylinositol-calcium second messenger system. In Macaca mulatta (Rhesus macaque), this protein is Bombesin receptor subtype-3 (BRS3).